The following is a 358-amino-acid chain: Phosphate acyltransferase (358 aa).

Residues 336–358 form a disordered region; it reads SAAGAAPASPETAPTPHPSTRAA.

It belongs to the PlsX family. Homodimer. Probably interacts with PlsY.

It localises to the cytoplasm. It carries out the reaction a fatty acyl-[ACP] + phosphate = an acyl phosphate + holo-[ACP]. It functions in the pathway lipid metabolism; phospholipid metabolism. Its function is as follows. Catalyzes the reversible formation of acyl-phosphate (acyl-PO(4)) from acyl-[acyl-carrier-protein] (acyl-ACP). This enzyme utilizes acyl-ACP as fatty acyl donor, but not acyl-CoA. The protein is Phosphate acyltransferase of Cupriavidus pinatubonensis (strain JMP 134 / LMG 1197) (Cupriavidus necator (strain JMP 134)).